The chain runs to 420 residues: Serine--tRNA ligase (420 aa).

Residue Thr-227–Glu-229 coordinates L-serine. ATP contacts are provided by residues Arg-258–Glu-260 and Val-274. Glu-281 is an L-serine binding site. Glu-345–Ser-348 contacts ATP. Position 379 (Thr-379) interacts with L-serine.

Belongs to the class-II aminoacyl-tRNA synthetase family. Type-1 seryl-tRNA synthetase subfamily. In terms of assembly, homodimer. The tRNA molecule binds across the dimer.

The protein localises to the cytoplasm. The enzyme catalyses tRNA(Ser) + L-serine + ATP = L-seryl-tRNA(Ser) + AMP + diphosphate + H(+). It carries out the reaction tRNA(Sec) + L-serine + ATP = L-seryl-tRNA(Sec) + AMP + diphosphate + H(+). Its pathway is aminoacyl-tRNA biosynthesis; selenocysteinyl-tRNA(Sec) biosynthesis; L-seryl-tRNA(Sec) from L-serine and tRNA(Sec): step 1/1. Catalyzes the attachment of serine to tRNA(Ser). Is also able to aminoacylate tRNA(Sec) with serine, to form the misacylated tRNA L-seryl-tRNA(Sec), which will be further converted into selenocysteinyl-tRNA(Sec). The sequence is that of Serine--tRNA ligase from Acidothermus cellulolyticus (strain ATCC 43068 / DSM 8971 / 11B).